Reading from the N-terminus, the 196-residue chain is UPF0340 protein TT_C0214 (196 aa).

Belongs to the UPF0340 family.

In Thermus thermophilus (strain ATCC BAA-163 / DSM 7039 / HB27), this protein is UPF0340 protein TT_C0214.